Reading from the N-terminus, the 611-residue chain is MAETAGSSGQGGGAYICFEADCSDSDTEVDSPVQCSDSSDEDLVDNANIVPGNHLELFQTQEKEAGERQISLLKRKFCLSPGTSEVEELSPGLAGIRISPPKRNPVVRRRLFDAGGRDAVRTPRDHEVNSSPEPRSQVQSGSSSRSWEGHLESINEPASDGNMAAVMHKLFKTLYIAGFGEITRVFQSDKTNNNQWVIAAHGASEVLYAASFEILSKHCSYLQASRKVHETGSMSLFLAVFNVGKSRETVRKLISGVLNTPCSRLLLQPPKIRGLCPALFWFKLGLSPATQTHGTTPDWIKQQTNVAYNTGEASKFDFGTMVQWAYDHRLTEECKIAYQYAKCAGTDLNAKAFLASTNQARLVKDCCTMVKHYLRAEEQSLTISAFIKRRCDNATGKGSWLSIMNLLKFQGIEPINFVNALKPWLKGTPKHNCIAIVGPPNSGKSLLCNTLMSFLGGKVLTFANHSSHFWLAPLTDCRVALIDDATHACWRYFDTYLRNVLDGYPVCIDRKHKSAVQLKAPPLLLTSNIDVHADEKYFYLQSRVKTFYFKEPCPASDTGEPLFFITDADWKNFFERLWERLDLSDQEDEVDEDECSQRSFTCSARNTDAMH.

The short motif at 74 to 76 (KRK) is the Nuclear localization signal element. S80, S84, and S90 each carry phosphoserine; by host. Positions 89 to 98 (LSPGLAGIRI) match the Nuclear export signal motif. The segment covering 112–128 (FDAGGRDAVRTPRDHEV) has biased composition (basic and acidic residues). The interval 112-154 (FDAGGRDAVRTPRDHEVNSSPEPRSQVQSGSSSRSWEGHLESI) is disordered. The segment covering 135 to 146 (RSQVQSGSSSRS) has biased composition (low complexity). The DNA-binding region stretch occupies residues 146–313 (SWEGHLESIN…TNVAYNTGEA (168 aa)). The 151-residue stretch at 412 to 562 (IEPINFVNAL…CPASDTGEPL (151 aa)) folds into the SF3 helicase domain. 438-445 (GPPNSGKS) contributes to the ATP binding site. Residue K519 forms a Glycyl lysine isopeptide (Lys-Gly) (interchain with G-Cter in SUMO) linkage.

It belongs to the papillomaviridae E1 protein family. Can form hexamers. Interacts with E2 protein; this interaction increases E1 DNA binding specificity. Interacts with host DNA polymerase subunit POLA2. Interacts with host single stranded DNA-binding protein RPA1. Interacts with host TOP1; this interaction stimulates the enzymatic activity of TOP1. In terms of processing, phosphorylated. Post-translationally, sumoylated.

It localises to the host nucleus. The enzyme catalyses Couples ATP hydrolysis with the unwinding of duplex DNA by translocating in the 3'-5' direction.. It carries out the reaction ATP + H2O = ADP + phosphate + H(+). ATP-dependent DNA 3'-5' helicase required for initiation of viral DNA replication. It forms a complex with the viral E2 protein. The E1-E2 complex binds to the replication origin which contains binding sites for both proteins. During the initial step, a dimer of E1 interacts with a dimer of protein E2 leading to a complex that binds the viral origin of replication with high specificity. Then, a second dimer of E1 displaces the E2 dimer in an ATP-dependent manner to form the E1 tetramer. Following this, two E1 monomers are added to each half of the site, which results in the formation of two E1 trimers on the viral ori. Subsequently, two hexamers will be created. The double hexamer acts as a bi-directional helicase machinery and unwinds the viral DNA and then recruits the host DNA polymerase to start replication. This chain is Replication protein E1, found in Cervus elaphus (Red deer).